We begin with the raw amino-acid sequence, 1021 residues long: Phytosulfokine receptor 1 (1021 aa).

Residues 1–24 (MGVLRVYVILILVGFCVQIVVVNS) form the signal peptide. Residues 21–43 (VVNSQNLTCNSNDLKALEGFMRG) form an LRR 1 repeat. Residues asparagine 26, asparagine 54, and asparagine 83 are each glycosylated (N-linked (GlcNAc...) asparagine). LRR repeat units follow at residues 85 to 109 (SGRV…VAKL), 110 to 133 (DQLK…LLNL), 135 to 156 (NLEV…LINL), 158 to 180 (SLRV…LCNN), 181 to 205 (LPRI…IGNC), 206 to 229 (SSVE…LFQL), 231 to 252 (NLSV…KLGK), 253 to 277 (LSNL…FLEL), 301 to 325 (SRSI…CSAM), 326 to 349 (TNLT…LPNC), 351 to 372 (RLKT…SFKN), 373 to 397 (FQSL…EILQ), 402 to 426 (LKTL…QFKN), 428 to 448 (KVLI…LSNS), 449 to 474 (PSLQ…SLNS), and 476 to 496 (FYLD…LTSL). Asparagine 116 and asparagine 132 each carry an N-linked (GlcNAc...) asparagine glycan. N-linked (GlcNAc...) asparagine glycans are attached at residues asparagine 204, asparagine 217, and asparagine 231. Residues asparagine 311, asparagine 321, and asparagine 327 are each glycosylated (N-linked (GlcNAc...) asparagine). 2 N-linked (GlcNAc...) asparagine glycosylation sites follow: asparagine 383 and asparagine 388. N-linked (GlcNAc...) asparagine glycans are attached at residues asparagine 482, asparagine 546, asparagine 568, asparagine 576, and asparagine 592. An LRR 18; atypical repeat occupies 498-555 (SLVSKENAVEEPSPDFPFFKKKNTNAGGLQYNQPSSFPPMIDLSYNSLNGSIWPEFGD). LRR repeat units follow at residues 556–580 (LRQL…LSGM), 581–604 (TSLE…LVKL), and 606–629 (FLST…QFQT). Asparagine 632 is a glycosylation site (N-linked (GlcNAc...) asparagine). Residues 673 to 693 (VAVGTGLGTVFLLTVTLLIIL) traverse the membrane as a helical segment. The region spanning 743–1014 (FNQANIIGCG…PTTQQLVSWL (272 aa)) is the Protein kinase domain. ATP-binding positions include 749-757 (IGCGGFGLV) and lysine 771. Aspartate 869 (proton acceptor) is an active-site residue.

It belongs to the protein kinase superfamily. Ser/Thr protein kinase family. In terms of processing, N-glycosylated. In terms of tissue distribution, expressed ubiquitously in leaf, apical meristem, hypocotyl and root.

It localises to the cell membrane. The enzyme catalyses L-seryl-[protein] + ATP = O-phospho-L-seryl-[protein] + ADP + H(+). It carries out the reaction L-threonyl-[protein] + ATP = O-phospho-L-threonyl-[protein] + ADP + H(+). Phytosulfokine receptor with a serine/threonine-protein kinase activity. Regulates, in response to phytosulfokine binding, a signaling cascade involved in plant cell differentiation, organogenesis and somatic embryogenesis. The chain is Phytosulfokine receptor 1 (PSKR) from Daucus carota (Wild carrot).